We begin with the raw amino-acid sequence, 344 residues long: Phenylalanine--tRNA ligase alpha subunit (344 aa).

Residue Glu-256 participates in Mg(2+) binding.

It belongs to the class-II aminoacyl-tRNA synthetase family. Phe-tRNA synthetase alpha subunit type 1 subfamily. As to quaternary structure, tetramer of two alpha and two beta subunits. Mg(2+) is required as a cofactor.

The protein resides in the cytoplasm. It catalyses the reaction tRNA(Phe) + L-phenylalanine + ATP = L-phenylalanyl-tRNA(Phe) + AMP + diphosphate + H(+). This chain is Phenylalanine--tRNA ligase alpha subunit, found in Geobacillus thermodenitrificans (strain NG80-2).